A 208-amino-acid polypeptide reads, in one-letter code: Platelet-activating factor receptor (208 aa).

Residues 1-16 (MEPHDSSHVDSEFRYT) lie on the Extracellular side of the membrane. Residues 17–38 (LFPIVYSIIFVLGVIANGYVLW) form a helical membrane-spanning segment. Residues 39–54 (VFARLYPSKKFNEIKI) are Cytoplasmic-facing. The helical transmembrane segment at 55–74 (FMVNLTMADMLFLITLPLWI) threads the bilayer. Over 75–91 (VYYQNGGNWIFPKFLCN) the chain is Extracellular. A disulfide bridge connects residues Cys90 and Cys173. A helical transmembrane segment spans residues 92–113 (LAGCLFFINTYCSVAFLGVITY). The Cytoplasmic segment spans residues 114-133 (NRFQAVTRPIKTAQANTRKR). A helical transmembrane segment spans residues 134 to 155 (GISLSLVIWVAIVGAASYFFIL). At 156 to 184 (DSTNTVPNSAGSGNITRCFEHYEKGSVPV) the chain is on the extracellular side. Asn169 carries N-linked (GlcNAc...) asparagine glycosylation. A helical membrane pass occupies residues 185 to 205 (LIIHIFIVFSFFLVFLIILFC). The Cytoplasmic segment spans residues 206-208 (NLV).

It belongs to the G-protein coupled receptor 1 family. Interacts with ARRB1.

It is found in the cell membrane. Its function is as follows. Receptor for platelet activating factor, a chemotactic phospholipid mediator that possesses potent inflammatory, smooth-muscle contractile and hypotensive activity. Seems to mediate its action via a G protein that activates a phosphatidylinositol-calcium second messenger system. In Macaca mulatta (Rhesus macaque), this protein is Platelet-activating factor receptor (PTAFR).